The sequence spans 353 residues: Phospho-N-acetylmuramoyl-pentapeptide-transferase (353 aa).

A run of 10 helical transmembrane segments spans residues 16-36, 64-84, 88-108, 130-150, 160-180, 198-218, 228-248, 256-276, 281-301, and 330-350; these read YISV…MYLM, AGTP…ATVL, LNNF…LIGI, LIFQ…YGHS, FPLF…IVGS, SILA…AVFA, IAGE…AFLW, VFMG…LAIV, ILLL…ILQV, and KIIV…LLSL.

It belongs to the glycosyltransferase 4 family. MraY subfamily. Mg(2+) is required as a cofactor.

The protein resides in the cell inner membrane. It carries out the reaction UDP-N-acetyl-alpha-D-muramoyl-L-alanyl-gamma-D-glutamyl-meso-2,6-diaminopimeloyl-D-alanyl-D-alanine + di-trans,octa-cis-undecaprenyl phosphate = di-trans,octa-cis-undecaprenyl diphospho-N-acetyl-alpha-D-muramoyl-L-alanyl-D-glutamyl-meso-2,6-diaminopimeloyl-D-alanyl-D-alanine + UMP. It functions in the pathway cell wall biogenesis; peptidoglycan biosynthesis. In terms of biological role, catalyzes the initial step of the lipid cycle reactions in the biosynthesis of the cell wall peptidoglycan: transfers peptidoglycan precursor phospho-MurNAc-pentapeptide from UDP-MurNAc-pentapeptide onto the lipid carrier undecaprenyl phosphate, yielding undecaprenyl-pyrophosphoryl-MurNAc-pentapeptide, known as lipid I. The polypeptide is Phospho-N-acetylmuramoyl-pentapeptide-transferase (Aliarcobacter butzleri (strain RM4018) (Arcobacter butzleri)).